We begin with the raw amino-acid sequence, 410 residues long: Envelope glycoprotein (410 aa).

Over P1–L410 the chain is Extracellular. N-linked (GlcNAc...) asparagine; by host glycosylation is found at N6 and N21. Disulfide bonds link C85-C107 and C99-C112. The segment at P193–K242 is disordered. Residues S210–A230 are compositionally biased toward polar residues. N-linked (GlcNAc...) asparagine; by host glycans are attached at residues N227, N262, and N267. The CXXC signature appears at C272–C275. 4 N-linked (GlcNAc...) asparagine; by host glycosylation sites follow: N294, N334, N350, and N370.

In terms of assembly, the mature envelope protein (Env) consists of a trimer of SU-TM heterodimers attached by a labile interchain disulfide bond. Post-translationally, specific enzymatic cleavages in vivo yield mature proteins. Envelope glycoproteins are synthesized as an inactive precursor that is N-glycosylated and processed likely by host cell furin or by a furin-like protease in the Golgi to yield the mature SU and TM proteins. The cleavage site between SU and TM requires the minimal sequence [KR]-X-[KR]-R.

It localises to the virion membrane. Its subcellular location is the host cell membrane. Its function is as follows. The surface protein (SU) attaches the virus to the host cell by binding to its receptor. This interaction triggers the refolding of the transmembrane protein (TM) and is thought to activate its fusogenic potential by unmasking its fusion peptide. Fusion occurs at the host cell plasma membrane. The transmembrane protein (TM) acts as a class I viral fusion protein. Under the current model, the protein has at least 3 conformational states: pre-fusion native state, pre-hairpin intermediate state, and post-fusion hairpin state. During viral and target cell membrane fusion, the coiled coil regions (heptad repeats) assume a trimer-of-hairpins structure, positioning the fusion peptide in close proximity to the C-terminal region of the ectodomain. The formation of this structure appears to drive apposition and subsequent fusion of viral and target cell membranes. Membranes fusion leads to delivery of the nucleocapsid into the cytoplasm. The chain is Envelope glycoprotein (env) from Feline leukemia virus (strain C/FA27).